We begin with the raw amino-acid sequence, 438 residues long: Trigger factor (438 aa).

Positions 163 to 249 (EDFVLIDYEG…LKEIRKQILP (87 aa)) constitute a PPIase FKBP-type domain.

The protein belongs to the FKBP-type PPIase family. Tig subfamily.

The protein localises to the cytoplasm. It catalyses the reaction [protein]-peptidylproline (omega=180) = [protein]-peptidylproline (omega=0). Functionally, involved in protein export. Acts as a chaperone by maintaining the newly synthesized protein in an open conformation. Functions as a peptidyl-prolyl cis-trans isomerase. The polypeptide is Trigger factor (Desulfatibacillum aliphaticivorans).